Reading from the N-terminus, the 400-residue chain is 3-phenylpropionate/cinnamic acid dioxygenase ferredoxin--NAD(+) reductase component (400 aa).

Residue 5–36 (TIIIVGGGQAAAMAAASLRQQGFTGELHLFSD) coordinates FAD. Residue 146–174 (SVVIVGAGTIGLELAASATQRRCKVTVIE) coordinates NAD(+).

The protein belongs to the bacterial ring-hydroxylating dioxygenase ferredoxin reductase family. As to quaternary structure, this dioxygenase system consists of four proteins: the two subunits of the hydroxylase component (HcaE and HcaF), a ferredoxin (HcaC) and a ferredoxin reductase (HcaD). It depends on FAD as a cofactor.

It catalyses the reaction 2 reduced [2Fe-2S]-[ferredoxin] + NAD(+) + H(+) = 2 oxidized [2Fe-2S]-[ferredoxin] + NADH. The protein operates within aromatic compound metabolism; 3-phenylpropanoate degradation. In terms of biological role, part of the multicomponent 3-phenylpropionate dioxygenase, that converts 3-phenylpropionic acid (PP) and cinnamic acid (CI) into 3-phenylpropionate-dihydrodiol (PP-dihydrodiol) and cinnamic acid-dihydrodiol (CI-dihydrodiol), respectively. This is 3-phenylpropionate/cinnamic acid dioxygenase ferredoxin--NAD(+) reductase component from Escherichia coli O157:H7.